The primary structure comprises 409 residues: uncharacterized protein (409 aa).

Positions 1–29 (MARSRCVHRVVHQAACIGVIGLSTSALTT) are cleaved as a signal peptide. Residue Cys-30 is the site of N-palmitoyl cysteine attachment. The S-diacylglycerol cysteine moiety is linked to residue Cys-30.

This sequence belongs to the TP013X lipoprotein family.

It is found in the cell membrane. This is an uncharacterized protein from Treponema pallidum (strain Nichols).